We begin with the raw amino-acid sequence, 156 residues long: Enhancer of split M1 protein (156 aa).

The first 19 residues, 1–19, serve as a signal peptide directing secretion; sequence MMSQTLTLCCLGLVACVYG. 2 Kazal-like domains span residues 23–81 and 96–156; these read STND…AWCS and KLEV…EEKC. Disulfide bonds link Cys29/Cys62, Cys33/Cys55, Cys102/Cys135, Cys106/Cys128, and Cys114/Cys156.

The polypeptide is Enhancer of split M1 protein (Drosophila simulans (Fruit fly)).